The following is a 908-amino-acid chain: Structural core protein VP2 (908 aa).

Residues 1-19 (MANPQNRVQTERQQNNSSP) show a composition bias toward polar residues. The tract at residues 1 to 25 (MANPQNRVQTERQQNNSSPYLRGDE) is disordered.

The protein belongs to the orbivirus VP3 family.

Its subcellular location is the virion. This Ixodes (gulls) protein is Structural core protein VP2 (Segment-2).